The chain runs to 237 residues: MTPHRLLPPLLLTLLLAARPGGALARCPGCGQGVSAGCPGGCAEEEDGGPAAEGCAEAGGCLRREGQQCGVYTPNCAPGLQCQPPEKEDLPLRALLQGRGRCGRARTPSGENPKESKPQAGTARSQDVNRRDQQRNSGTSTTPSRSNSGGVQDTEMGPCRKHLDSVLQQLQTEVFRGAHTLYVPNCDHRGFYRKRQCRSSQGQRRGPCWCVERMGQPLPGSSEGGDGSSLCPTGSSG.

Positions methionine 1–alanine 25 are cleaved as a signal peptide. The 80-residue stretch at arginine 26–alanine 105 folds into the IGFBP N-terminal domain. Disulfide bonds link cysteine 27-cysteine 30, cysteine 38-cysteine 42, cysteine 55-cysteine 61, cysteine 69-cysteine 82, and cysteine 76-cysteine 102. The interval arginine 101–proline 158 is disordered. Over residues arginine 135–valine 151 the composition is skewed to polar residues. A Thyroglobulin type-1 domain is found at methionine 156–cysteine 231. Intrachain disulfides connect cysteine 159-cysteine 186, cysteine 197-cysteine 208, and cysteine 210-cysteine 231. The disordered stretch occupies residues glycine 215 to glycine 237.

As to quaternary structure, interacts (via C-terminal domain) with PHB2. Post-translationally, O-glycosylated.

It is found in the secreted. In terms of biological role, IGF-binding proteins prolong the half-life of the IGFs and have been shown to either inhibit or stimulate the growth promoting effects of the IGFs on cell culture. They alter the interaction of IGFs with their cell surface receptors. Activates the MAPK signaling pathway and induces cell migration. The protein is Insulin-like growth factor-binding protein 6 (IGFBP6) of Bos taurus (Bovine).